Here is an 818-residue protein sequence, read N- to C-terminus: BDNF/NT-3 growth factors receptor (818 aa).

Residues M1–G31 form the signal peptide. 2 disulfide bridges follow: C32–C38 and C36–C45. Topologically, residues C32–S426 are extracellular. Residue N66 is glycosylated (N-linked (GlcNAc...) asparagine). An LRR 1 repeat occupies Y71–L92. A glycan (N-linked (GlcNAc...) asparagine) is linked at N94. The stretch at L95–L116 is one LRR 2 repeat. N120 carries an N-linked (GlcNAc...) asparagine glycan. Cystine bridges form between C151-C175 and C153-C193. The Ig-like C2-type 1 domain maps to P196–T281. N-linked (GlcNAc...) asparagine glycosylation is found at N199, N204, N226, N253, N287, N324, and N337. C217 and C265 are oxidised to a cystine. Positions T295–N364 constitute an Ig-like C2-type 2 domain. C301 and C344 are disulfide-bonded. The segment at G384–Y394 is provides specificity for BDNF as ligand versus NTF3 and NTF4. The span at P400 to V418 shows a compositional bias: polar residues. Residues P400 to N420 are disordered. N408 carries N-linked (GlcNAc...) asparagine glycosylation. The helical transmembrane segment at I427–L450 threads the bilayer. Residues K451–G818 lie on the Cytoplasmic side of the membrane. The segment at N469 to P494 is disordered. A compositionally biased stretch (polar residues) spans S481–E491. Y512 is modified (phosphotyrosine; by autocatalysis). Positions I534–L803 constitute a Protein kinase domain. ATP contacts are provided by residues L540 to V548 and K568. The Proton acceptor role is filled by D672. Phosphotyrosine; by autocatalysis is present on residues Y698, Y702, Y703, and Y813.

This sequence belongs to the protein kinase superfamily. Tyr protein kinase family. Insulin receptor subfamily. In terms of assembly, exists in a dynamic equilibrium between monomeric (low affinity) and dimeric (high affinity) structures. Interacts (phosphorylated upon activation by BDNF) with SHC1; mediates SHC1 phosphorylation and activation. Interacts (phosphorylated upon activation by BDNF) with PLCG1 and/or PLCG2; mediates PLCG1 phosphorylation and activation. Interacts with SH2B1 and SH2B2. Interacts with NGFR; may regulate the ligand specificity of the receptor. Interacts with SORCS2; this interaction is important for normal targeting to post-synaptic densities in response to high-frequency stimulation. Interacts (phosphorylated upon ligand-binding) with SH2D1A; regulates NTRK2. Interacts with SQSTM1 and KIDINS220. Interacts (phosphorylated upon ligand-binding) with FRS2; activates the MAPK signaling pathway. Interacts with APPL1. Interacts with MAPK8IP3/JIP3 and KLC1; interaction with KLC1 is mediated by MAPK8IP3/JIP3. In terms of processing, ligand-mediated auto-phosphorylation. Detected in embryonic brain and orsal root ganglia.

The protein localises to the cell membrane. It localises to the endosome membrane. The protein resides in the cell projection. It is found in the axon. Its subcellular location is the dendrite. The protein localises to the cytoplasm. It localises to the perinuclear region. The protein resides in the postsynaptic density. It catalyses the reaction L-tyrosyl-[protein] + ATP = O-phospho-L-tyrosyl-[protein] + ADP + H(+). With respect to regulation, the neuronal activity and the influx of calcium positively regulate the kinase activity and the internalization of the receptor which are both important for active signaling. Regulated by NGFR that may control the internalization of the receptor. NGFR may also stimulate the activation by BDNF compared to NTF3 and NTF4. The formation of active receptors dimers able to fully transduce the ligand-mediated signal, may be negatively regulated by the formation of inactive heterodimers with the non-catalytic isoforms. In terms of biological role, receptor tyrosine kinase involved in the development and the maturation of the central and the peripheral nervous systems through regulation of neuron survival, proliferation, migration, differentiation, and synapse formation and plasticity. Receptor for BDNF/brain-derived neurotrophic factor and NTF4/neurotrophin-4. Alternatively can also bind NTF3/neurotrophin-3 which is less efficient in activating the receptor but regulates neuron survival through NTRK2. Upon ligand-binding, undergoes homodimerization, autophosphorylation and activation. Recruits, phosphorylates and/or activates several downstream effectors including SHC1, FRS2, SH2B1, SH2B2 and PLCG1 that regulate distinct overlapping signaling cascades. Through SHC1, FRS2, SH2B1, SH2B2 activates the GRB2-Ras-MAPK cascade that regulates for instance neuronal differentiation including neurite outgrowth. Through the same effectors controls the Ras-PI3 kinase-AKT1 signaling cascade that mainly regulates growth and survival. Through PLCG1 and the downstream protein kinase C-regulated pathways controls synaptic plasticity. Thereby, plays a role in learning and memory by regulating both short term synaptic function and long-term potentiation. PLCG1 also leads to NF-Kappa-B activation and the transcription of genes involved in cell survival. Hence, it is able to suppress anoikis, the apoptosis resulting from loss of cell-matrix interactions. May also play a role in neutrophin-dependent calcium signaling in glial cells and mediate communication between neurons and glia. This Gallus gallus (Chicken) protein is BDNF/NT-3 growth factors receptor (NTRK2).